The sequence spans 380 residues: Cytochrome b (380 aa).

Helical transmembrane passes span 34-54 (FGSL…FLAM), 78-99 (WLLR…YFHI), 114-134 (WNIG…GYVL), and 179-199 (FFTF…IHLL). The heme b site is built by His-84 and His-98. Heme b-binding residues include His-183 and His-197. Position 202 (His-202) interacts with a ubiquinone. 4 helical membrane-spanning segments follow: residues 227–247 (YKDL…STFA), 289–309 (LGGV…PIIH), 321–341 (IAKT…WIGG), and 348–368 (FITI…LLIP).

It belongs to the cytochrome b family. As to quaternary structure, the cytochrome bc1 complex contains 3 respiratory subunits (MT-CYB, CYC1 and UQCRFS1), 2 core proteins (UQCRC1 and UQCRC2) and probably 6 low-molecular weight proteins. Requires heme b as cofactor.

Its subcellular location is the mitochondrion inner membrane. Its function is as follows. Component of the ubiquinol-cytochrome c reductase complex (complex III or cytochrome b-c1 complex) that is part of the mitochondrial respiratory chain. The b-c1 complex mediates electron transfer from ubiquinol to cytochrome c. Contributes to the generation of a proton gradient across the mitochondrial membrane that is then used for ATP synthesis. The polypeptide is Cytochrome b (mt-cyb) (Pelophylax nigromaculatus (Black-spotted frog)).